We begin with the raw amino-acid sequence, 23 residues long: Cardioactive peptide CAP23 (23 aa).

Cys7 and Cys19 are disulfide-bonded.

The protein belongs to the GBP/PSP1/paralytic peptide family.

Has excitatory effects on a semi-isolated heart from larval Manduca sexta, causing an inotropic effect at low concentrations of peptide and chronotropic and inotropic effects at high doses. This chain is Cardioactive peptide CAP23, found in Spodoptera eridania (Southern armyworm).